A 239-amino-acid polypeptide reads, in one-letter code: Large ribosomal subunit protein uL2 (239 aa).

The tract at residues 205-224 (GGHQHCGRPKTVARGTSPGR) is disordered.

The protein belongs to the universal ribosomal protein uL2 family. In terms of assembly, part of the 50S ribosomal subunit. Forms a bridge to the 30S subunit in the 70S ribosome.

One of the primary rRNA binding proteins. Required for association of the 30S and 50S subunits to form the 70S ribosome, for tRNA binding and peptide bond formation. It has been suggested to have peptidyltransferase activity; this is somewhat controversial. Makes several contacts with the 16S rRNA in the 70S ribosome. The chain is Large ribosomal subunit protein uL2 from Methanoculleus marisnigri (strain ATCC 35101 / DSM 1498 / JR1).